The primary structure comprises 489 residues: MTFRHCVAVDLGASSGRVMLARYDSKHRTLTLREIHRFVNCLQKTDGFDTWDIDSLEKDIRLGLKKVCNEGILIDSIGIDTWGVDYVLLDKQGQRVGLPVSYRDNRTTGIMPQALVQIGKSEIYRRSGIQFLPFNTIYQLRALTKQQPELTAQVAHALLMPDYFSYRLTGEMNWEYTNATTTQLVNINTDDWDDTLLAWTGAKKSWFGRPSHPGNVIGDWICPQGNRIPVVAVASHDTASAVIASPLANKHSAYLSSGTWSLMGFESKMPYTTDEALAANITNEGGAEGRYRVLKNIMGLWLLQRVLKERRITDLPALIAQTEALPACRFLINPNDDRFINPDDMRAEIQAACRETDQPVPVSDAELARCIFDSLALLYADILHEQANLRGEKFTQLHIVGGGCQNSLLNQLCADACGIRVMAGPVEASTLGNIGIQLMTLDELNNVDDFRQVVSANYDLTTYIPNPDSEIARHVAQFQPKRQTKELCA.

13 to 17 (ASSGR) lines the ATP pocket. The cysteines at positions 68 and 222 are disulfide-linked. Substrate is bound by residues Gly-83 and 236–238 (HDT). Asp-237 (proton acceptor) is an active-site residue. Position 259 (Thr-259) interacts with ATP. Residue Asn-296 participates in substrate binding. Gln-304 serves as a coordination point for ATP. A disulfide bond links Cys-353 and Cys-370. Residue Gly-402 coordinates ATP. Cysteines 413 and 417 form a disulfide.

The protein belongs to the rhamnulokinase family. Mg(2+) is required as a cofactor.

The catalysed reaction is L-rhamnulose + ATP = L-rhamnulose 1-phosphate + ADP + H(+). The protein operates within carbohydrate degradation; L-rhamnose degradation; glycerone phosphate from L-rhamnose: step 2/3. In terms of biological role, involved in the catabolism of L-rhamnose (6-deoxy-L-mannose). Catalyzes the transfer of the gamma-phosphate group from ATP to the 1-hydroxyl group of L-rhamnulose to yield L-rhamnulose 1-phosphate. The sequence is that of Rhamnulokinase from Salmonella typhimurium (strain LT2 / SGSC1412 / ATCC 700720).